We begin with the raw amino-acid sequence, 274 residues long: UPF0173 metal-dependent hydrolase AnaeK_1127 (274 aa).

Belongs to the UPF0173 family.

This Anaeromyxobacter sp. (strain K) protein is UPF0173 metal-dependent hydrolase AnaeK_1127.